The primary structure comprises 671 residues: DNA ligase (671 aa).

NAD(+) is bound by residues 32–36 (DAEYD), 81–82 (SL), and Glu113. Catalysis depends on Lys115, which acts as the N6-AMP-lysine intermediate. Arg136, Glu173, Lys290, and Lys314 together coordinate NAD(+). Residues Cys408, Cys411, Cys426, and Cys432 each contribute to the Zn(2+) site. The BRCT domain maps to 593–671 (EIDSPFAGKT…ETEMLRLLGS (79 aa)).

This sequence belongs to the NAD-dependent DNA ligase family. LigA subfamily. Requires Mg(2+) as cofactor. It depends on Mn(2+) as a cofactor.

It catalyses the reaction NAD(+) + (deoxyribonucleotide)n-3'-hydroxyl + 5'-phospho-(deoxyribonucleotide)m = (deoxyribonucleotide)n+m + AMP + beta-nicotinamide D-nucleotide.. DNA ligase that catalyzes the formation of phosphodiester linkages between 5'-phosphoryl and 3'-hydroxyl groups in double-stranded DNA using NAD as a coenzyme and as the energy source for the reaction. It is essential for DNA replication and repair of damaged DNA. This chain is DNA ligase, found in Escherichia coli O6:H1 (strain CFT073 / ATCC 700928 / UPEC).